Reading from the N-terminus, the 371-residue chain is Peptide chain release factor 2 (371 aa).

The residue at position 247 (Gln-247) is an N5-methylglutamine.

Belongs to the prokaryotic/mitochondrial release factor family. Post-translationally, methylated by PrmC. Methylation increases the termination efficiency of RF2.

Its subcellular location is the cytoplasm. In terms of biological role, peptide chain release factor 2 directs the termination of translation in response to the peptide chain termination codons UGA and UAA. The polypeptide is Peptide chain release factor 2 (Caulobacter vibrioides (strain ATCC 19089 / CIP 103742 / CB 15) (Caulobacter crescentus)).